The following is a 233-amino-acid chain: Methylthioribulose-1-phosphate dehydratase (233 aa).

Cys-91 is a substrate binding site. Positions 108 and 110 each coordinate Zn(2+). Catalysis depends on Glu-137, which acts as the Proton donor/acceptor. His-194 provides a ligand contact to Zn(2+).

It belongs to the aldolase class II family. MtnB subfamily. Zn(2+) serves as cofactor.

Its subcellular location is the cytoplasm. The catalysed reaction is 5-(methylsulfanyl)-D-ribulose 1-phosphate = 5-methylsulfanyl-2,3-dioxopentyl phosphate + H2O. The protein operates within amino-acid biosynthesis; L-methionine biosynthesis via salvage pathway; L-methionine from S-methyl-5-thio-alpha-D-ribose 1-phosphate: step 2/6. Catalyzes the dehydration of methylthioribulose-1-phosphate (MTRu-1-P) into 2,3-diketo-5-methylthiopentyl-1-phosphate (DK-MTP-1-P). This chain is Methylthioribulose-1-phosphate dehydratase, found in Phaeosphaeria nodorum (strain SN15 / ATCC MYA-4574 / FGSC 10173) (Glume blotch fungus).